Consider the following 582-residue polypeptide: ATP-dependent lipid A-core flippase (582 aa).

The next 5 membrane-spanning stretches (helical) occupy residues 16 to 36 (LWPM…ALIL), 63 to 83 (ILVW…VSGF), 153 to 173 (IIGL…ILVV), 253 to 273 (PLIQ…ASFP), and 275 to 295 (VMET…IALM). The ABC transmembrane type-1 domain occupies 28–310 (IVAAIALILN…LTNVNAQFQR (283 aa)). The ABC transporter domain maps to 342-578 (IAFDHVTFSY…QGVYAQLHQL (237 aa)). 376–383 (GRSGSGKS) provides a ligand contact to ATP.

Belongs to the ABC transporter superfamily. Lipid exporter (TC 3.A.1.106) family. In terms of assembly, homodimer.

Its subcellular location is the cell inner membrane. It catalyses the reaction ATP + H2O + lipid A-core oligosaccharideSide 1 = ADP + phosphate + lipid A-core oligosaccharideSide 2.. In terms of biological role, involved in lipopolysaccharide (LPS) biosynthesis. Translocates lipid A-core from the inner to the outer leaflet of the inner membrane. Transmembrane domains (TMD) form a pore in the inner membrane and the ATP-binding domain (NBD) is responsible for energy generation. This Sodalis glossinidius (strain morsitans) protein is ATP-dependent lipid A-core flippase.